We begin with the raw amino-acid sequence, 79 residues long: Exodeoxyribonuclease 7 small subunit (79 aa).

Belongs to the XseB family. In terms of assembly, heterooligomer composed of large and small subunits.

It localises to the cytoplasm. It carries out the reaction Exonucleolytic cleavage in either 5'- to 3'- or 3'- to 5'-direction to yield nucleoside 5'-phosphates.. Its function is as follows. Bidirectionally degrades single-stranded DNA into large acid-insoluble oligonucleotides, which are then degraded further into small acid-soluble oligonucleotides. The polypeptide is Exodeoxyribonuclease 7 small subunit (Lactococcus lactis subsp. lactis (strain IL1403) (Streptococcus lactis)).